The following is a 179-amino-acid chain: O-acetyl-ADP-ribose deacetylase (179 aa).

A Macro domain is found at 1 to 175 (MTSRLQVIQG…LYARLLTQQG (175 aa)). Residues 11 to 12 (DI), N25, 33 to 35 (GVD), and 122 to 126 (STGVY) contribute to the substrate site. The active-site Proton acceptor is the D35.

The protein belongs to the MacroD-type family. YmdB subfamily. Homodimer. Interacts with RNase III.

It carries out the reaction 3''-O-acetyl-ADP-D-ribose + H2O = ADP-D-ribose + acetate + H(+). The enzyme catalyses 2''-O-acetyl-ADP-D-ribose + H2O = ADP-D-ribose + acetate + H(+). Deacetylates O-acetyl-ADP ribose to yield ADP-ribose and free acetate. Down-regulates ribonuclease 3 (RNase III) activity. Acts by interacting directly with the region of the ribonuclease that is required for dimerization/activation. The polypeptide is O-acetyl-ADP-ribose deacetylase (Salmonella gallinarum (strain 287/91 / NCTC 13346)).